Here is a 204-residue protein sequence, read N- to C-terminus: Small ribosomal subunit protein uS4c (204 aa).

The S4 RNA-binding domain occupies 90 to 150 (MRLDNILYRL…GKKTDQLKTI (61 aa)).

It belongs to the universal ribosomal protein uS4 family. In terms of assembly, part of the 30S ribosomal subunit. Contacts protein S5. The interaction surface between S4 and S5 is involved in control of translational fidelity.

Its subcellular location is the plastid. It localises to the chloroplast. In terms of biological role, one of the primary rRNA binding proteins, it binds directly to 16S rRNA where it nucleates assembly of the body of the 30S subunit. With S5 and S12 plays an important role in translational accuracy. The sequence is that of Small ribosomal subunit protein uS4c (rps4) from Gnetum parvifolium (Small-leaved jointfir).